A 79-amino-acid chain; its full sequence is MSDIEARVRKIIAEQLGVEESQVTNEKAFVADLGADSLDSVELVMALEDEFGIEIPDEDAEKITTVQSAIDYANTHQKA.

Residues 2 to 77 (SDIEARVRKI…SAIDYANTHQ (76 aa)) enclose the Carrier domain. Position 37 is an O-(pantetheine 4'-phosphoryl)serine (Ser-37).

This sequence belongs to the acyl carrier protein (ACP) family. 4'-phosphopantetheine is transferred from CoA to a specific serine of apo-ACP by AcpS. This modification is essential for activity because fatty acids are bound in thioester linkage to the sulfhydryl of the prosthetic group.

Its subcellular location is the cytoplasm. It participates in lipid metabolism; fatty acid biosynthesis. Its function is as follows. Carrier of the growing fatty acid chain in fatty acid biosynthesis. The sequence is that of Acyl carrier protein from Verminephrobacter eiseniae (strain EF01-2).